Reading from the N-terminus, the 397-residue chain is MFGSCQAYSRELVMATTFSPSATAWIIQRWQTEPGSVMIRTLNRTSGSLEQLLDTANAENVDLILTSSPMLLQHLQEHQKLALLDSAPAASQKLVPRSIRSTSVAVAVSGFGLLINRSALAARHLPPPADWQDMGLPSYQGALLMSSPSRSDTNHLMVESLLQQKGWTAGWATLLAISGNLVTISSRSFGVADKIKSGLGVAGPVIDNYANLLLNDPNLAFTYFPYSAVSPTYVAVLKNSRHADEARAFIHYLLSPKGQRILADANTGKYPVAPLSADNPRAAQQQRLMAQPPLNYRLILKRQQLVQRMFDTAISFRLAQLKDAWRALHSAETRLKRPLPEIRALLTSVPVDAASSEDETWLAQFDNKSFAEQKMMEWQIWFLNNQRLAIHKLEELK.

The N-terminal stretch at 1–24 (MFGSCQAYSRELVMATTFSPSATA) is a signal peptide. Residues 102-117 (TSVAVAVSGFGLLINR) traverse the membrane as a helical segment.

It localises to the cell membrane. Its function is as follows. Required for pgtP expression, it may act jointly with the PgtA/PgtB signaling proteins. The chain is Phosphoglycerate transport regulatory protein PgtC (pgtC) from Salmonella typhi.